Here is a 227-residue protein sequence, read N- to C-terminus: PKHD-type hydroxylase Bcen_3557 (227 aa).

The Fe2OG dioxygenase domain occupies 78-178; that stretch reads KVFPPLFNRY…RVASFFWIQS (101 aa). Fe cation-binding residues include histidine 96, aspartate 98, and histidine 159. Residue arginine 169 coordinates 2-oxoglutarate.

Fe(2+) is required as a cofactor. It depends on L-ascorbate as a cofactor.

This Burkholderia orbicola (strain AU 1054) protein is PKHD-type hydroxylase Bcen_3557.